A 37-amino-acid chain; its full sequence is Cytochrome b6-f complex subunit 5 (37 aa).

A helical membrane pass occupies residues Leu-5 to Ala-25.

The protein belongs to the PetG family. As to quaternary structure, the 4 large subunits of the cytochrome b6-f complex are cytochrome b6, subunit IV (17 kDa polypeptide, PetD), cytochrome f and the Rieske protein, while the 4 small subunits are PetG, PetL, PetM and PetN. The complex functions as a dimer.

Its subcellular location is the plastid. The protein resides in the chloroplast thylakoid membrane. Its function is as follows. Component of the cytochrome b6-f complex, which mediates electron transfer between photosystem II (PSII) and photosystem I (PSI), cyclic electron flow around PSI, and state transitions. PetG is required for either the stability or assembly of the cytochrome b6-f complex. The chain is Cytochrome b6-f complex subunit 5 from Chlorokybus atmophyticus (Soil alga).